The sequence spans 275 residues: Hydroxyethylthiazole kinase (275 aa).

Methionine 50 is a substrate binding site. Residues arginine 126 and serine 171 each contribute to the ATP site. A substrate-binding site is contributed by alanine 200.

Belongs to the Thz kinase family. Mg(2+) is required as a cofactor.

The catalysed reaction is 5-(2-hydroxyethyl)-4-methylthiazole + ATP = 4-methyl-5-(2-phosphooxyethyl)-thiazole + ADP + H(+). Its pathway is cofactor biosynthesis; thiamine diphosphate biosynthesis; 4-methyl-5-(2-phosphoethyl)-thiazole from 5-(2-hydroxyethyl)-4-methylthiazole: step 1/1. Its function is as follows. Catalyzes the phosphorylation of the hydroxyl group of 4-methyl-5-beta-hydroxyethylthiazole (THZ). The protein is Hydroxyethylthiazole kinase of Acinetobacter baumannii (strain SDF).